Reading from the N-terminus, the 32-residue chain is AGGKSTCCPCAMCKYTAGCPWGQCAHHCGCSE.

The protein belongs to the sea anemone short toxin (type III) family. Post-translationally, contains 4 disulfide bonds.

It localises to the secreted. It is found in the nematocyst. Functionally, binds specifically to sodium channels (Nav) of the axonal membrane of crayfish and prolongs the falling phase of the action potential. It also increases the maximum rates of rise of both action potential and resting potential. Is only active on crustaceans. The polypeptide is Delta-actitoxin-Eqd1a (Entacmaea quadricolor (Bubble-tip anemone)).